A 552-amino-acid chain; its full sequence is Esterase E4 (552 aa).

A signal peptide spans 1 to 23 (MKNTCGILLNLFLFIGCFLTCSA). The N-linked (GlcNAc...) asparagine glycan is linked to N81. C89 and C106 are joined by a disulfide. Catalysis depends on S214, which acts as the Acyl-ester intermediate. C266 and C277 form a disulfide bridge. N-linked (GlcNAc...) asparagine glycosylation is present at N269. Residue E339 is the Charge relay system of the active site. N-linked (GlcNAc...) asparagine glycans are attached at residues N371, N404, and N443. H463 acts as the Charge relay system in catalysis.

This sequence belongs to the type-B carboxylesterase/lipase family.

It carries out the reaction a carboxylic ester + H2O = an alcohol + a carboxylate + H(+). Overproduction of nonspecific esterases is a common mechanism of resistance to organophosphate insecticides. The polypeptide is Esterase E4 (Myzus persicae (Green peach aphid)).